The chain runs to 415 residues: E3 ubiquitin-protein ligase RNF135 (415 aa).

The segment at 21–67 (CIICQGLLDWPTTLPCGHSFCLQCLKDLWVSKRAGVDSCPWACPICR) adopts an RING-type zinc-finger fold. Residues 181–206 (TFSASQKKIQEILRDLEKIQETLQGS) adopt a coiled-coil conformation. Residues 228–415 (PDQRYPVSRK…LTPGNYLEIL (188 aa)) form the B30.2/SPRY domain.

Homodimer. Interacts (homodimer) with RIGI (double-stranded RNA-bound oligomeric form); involved in both RIGI ubiquitination, oligomerization into filaments associated with viral RNAs and the bridging of these filaments. Interacts with UBE2D3 and UBE2N; E2 ubiquitin ligases involved in RNF135-mediated ubiquitination of RIGI and activation of the RIG-I signaling pathway. Interacts with PCBP2.

It localises to the cytoplasm. It is found in the stress granule. It catalyses the reaction S-ubiquitinyl-[E2 ubiquitin-conjugating enzyme]-L-cysteine + [acceptor protein]-L-lysine = [E2 ubiquitin-conjugating enzyme]-L-cysteine + N(6)-ubiquitinyl-[acceptor protein]-L-lysine.. Its pathway is protein modification; protein ubiquitination. Its function is as follows. E2-dependent E3 ubiquitin-protein ligase that functions as a RIGI coreceptor in the sensing of viral RNAs in cell cytoplasm and the activation of the antiviral innate immune response. Together with the UBE2D3, UBE2N and UB2V1 E2 ligases, catalyzes the 'Lys-63'-linked polyubiquitination of RIGI oligomerized on viral RNAs, an essential step in the activation of the RIG-I signaling pathway. Through a ubiquitin-independent parallel mechanism, which consists in bridging RIGI filaments forming on longer viral RNAs, further activates the RIG-I signaling pathway. This second mechanism that synergizes with the ubiquitin-dependent one would thereby allow an RNA length-dependent regulation of the RIG-I signaling pathway. Associated with the E2 ligase UBE2N, also constitutively synthesizes unanchored 'Lys-63'-linked polyubiquitin chains that may also activate the RIG-I signaling pathway. The sequence is that of E3 ubiquitin-protein ligase RNF135 from Rattus norvegicus (Rat).